Here is a 568-residue protein sequence, read N- to C-terminus: Urease subunit alpha (568 aa).

The region spanning glycine 130–phenylalanine 568 is the Urease domain. 3 residues coordinate Ni(2+): histidine 135, histidine 137, and lysine 218. Lysine 218 is modified (N6-carboxylysine). Histidine 220 contributes to the substrate binding site. The Ni(2+) site is built by histidine 247 and histidine 273. Residue histidine 321 is the Proton donor of the active site. Aspartate 361 provides a ligand contact to Ni(2+).

Belongs to the metallo-dependent hydrolases superfamily. Urease alpha subunit family. Heterotrimer of UreA (gamma), UreB (beta) and UreC (alpha) subunits. Three heterotrimers associate to form the active enzyme. Requires Ni cation as cofactor. Carboxylation allows a single lysine to coordinate two nickel ions.

It localises to the cytoplasm. It carries out the reaction urea + 2 H2O + H(+) = hydrogencarbonate + 2 NH4(+). The protein operates within nitrogen metabolism; urea degradation; CO(2) and NH(3) from urea (urease route): step 1/1. This chain is Urease subunit alpha, found in Burkholderia pseudomallei (strain K96243).